Here is a 138-residue protein sequence, read N- to C-terminus: Oleosin G (138 aa).

Transmembrane regions (helical) follow at residues 14–34 (ILGF…TGLT), 48–68 (VLIF…VAVA), and 69–89 (GFLS…WLYN). The Proline-knot motif lies at 47-58 (PVLIFFSPILIP).

This sequence belongs to the oleosin family. In terms of tissue distribution, expressed in megagametophytes (at protein level).

The protein resides in the lipid droplet. The protein localises to the membrane. This chain is Oleosin G, found in Pinus massoniana (Chinese red pine).